The chain runs to 235 residues: Ribonuclease 3 (235 aa).

Residues 6-131 (IDQLERLTEH…LIAVMYLDGG (126 aa)) enclose the RNase III domain. Glu-44 lines the Mg(2+) pocket. Asp-48 is a catalytic residue. Mg(2+) contacts are provided by Asp-117 and Glu-120. Residue Glu-120 is part of the active site. Positions 156 to 225 (DAKTELQEWA…AEKVLRREGI (70 aa)) constitute a DRBM domain.

It belongs to the ribonuclease III family. Homodimer. The cofactor is Mg(2+).

It is found in the cytoplasm. The catalysed reaction is Endonucleolytic cleavage to 5'-phosphomonoester.. Its function is as follows. Digests double-stranded RNA. Involved in the processing of primary rRNA transcript to yield the immediate precursors to the large and small rRNAs (23S and 16S). Processes some mRNAs, and tRNAs when they are encoded in the rRNA operon. Processes pre-crRNA and tracrRNA of type II CRISPR loci if present in the organism. This is Ribonuclease 3 from Bartonella quintana (strain Toulouse) (Rochalimaea quintana).